The chain runs to 281 residues: DegV domain-containing protein CA_C0948 (281 aa).

Residues 4 to 280 (IAIITDTTAD…PGLVGLVLLE (277 aa)) form the DegV domain. Hexadecanoate is bound by residues S60 and S93.

Its function is as follows. May bind long-chain fatty acids, such as palmitate, and may play a role in lipid transport or fatty acid metabolism. The sequence is that of DegV domain-containing protein CA_C0948 from Clostridium acetobutylicum (strain ATCC 824 / DSM 792 / JCM 1419 / IAM 19013 / LMG 5710 / NBRC 13948 / NRRL B-527 / VKM B-1787 / 2291 / W).